Reading from the N-terminus, the 452-residue chain is Bifunctional protein GlmU (452 aa).

The tract at residues 1 to 232 (MTSRTSLTIV…EDEVRGINTK (232 aa)) is pyrophosphorylase. UDP-N-acetyl-alpha-D-glucosamine-binding positions include 11-14 (LAAG), Lys25, Gln78, and 83-84 (GT). A Mg(2+)-binding site is contributed by Asp108. Gly144, Glu158, Asn173, and Asn230 together coordinate UDP-N-acetyl-alpha-D-glucosamine. Asn230 contacts Mg(2+). A linker region spans residues 233-253 (AQLAEAEAVMQARLRQAALDA). Residues 254–452 (GVTMIAPETV…KTRGKTRPAK (199 aa)) form an N-acetyltransferase region. Arg319 and Lys337 together coordinate UDP-N-acetyl-alpha-D-glucosamine. His349 functions as the Proton acceptor in the catalytic mechanism. The UDP-N-acetyl-alpha-D-glucosamine site is built by Tyr352 and Asn363. Acetyl-CoA contacts are provided by residues Ala366, 372–373 (NY), Ser391, Ser409, and Arg426.

It in the N-terminal section; belongs to the N-acetylglucosamine-1-phosphate uridyltransferase family. In the C-terminal section; belongs to the transferase hexapeptide repeat family. In terms of assembly, homotrimer. Requires Mg(2+) as cofactor.

The protein resides in the cytoplasm. It carries out the reaction alpha-D-glucosamine 1-phosphate + acetyl-CoA = N-acetyl-alpha-D-glucosamine 1-phosphate + CoA + H(+). The enzyme catalyses N-acetyl-alpha-D-glucosamine 1-phosphate + UTP + H(+) = UDP-N-acetyl-alpha-D-glucosamine + diphosphate. Its pathway is nucleotide-sugar biosynthesis; UDP-N-acetyl-alpha-D-glucosamine biosynthesis; N-acetyl-alpha-D-glucosamine 1-phosphate from alpha-D-glucosamine 6-phosphate (route II): step 2/2. It functions in the pathway nucleotide-sugar biosynthesis; UDP-N-acetyl-alpha-D-glucosamine biosynthesis; UDP-N-acetyl-alpha-D-glucosamine from N-acetyl-alpha-D-glucosamine 1-phosphate: step 1/1. It participates in bacterial outer membrane biogenesis; LPS lipid A biosynthesis. Its function is as follows. Catalyzes the last two sequential reactions in the de novo biosynthetic pathway for UDP-N-acetylglucosamine (UDP-GlcNAc). The C-terminal domain catalyzes the transfer of acetyl group from acetyl coenzyme A to glucosamine-1-phosphate (GlcN-1-P) to produce N-acetylglucosamine-1-phosphate (GlcNAc-1-P), which is converted into UDP-GlcNAc by the transfer of uridine 5-monophosphate (from uridine 5-triphosphate), a reaction catalyzed by the N-terminal domain. In Rhodopseudomonas palustris (strain BisA53), this protein is Bifunctional protein GlmU.